A 181-amino-acid polypeptide reads, in one-letter code: Regulator of G-protein signaling 5 (181 aa).

The 117-residue stretch at 64-180 (SLDKLLQSNY…VRSEFYKELI (117 aa)) folds into the RGS domain.

Its subcellular location is the cytoplasm. It localises to the membrane. Inhibits signal transduction by increasing the GTPase activity of G protein alpha subunits thereby driving them into their inactive GDP-bound form. Binds to G(i)-alpha and G(o)-alpha, but not to G(s)-alpha. The chain is Regulator of G-protein signaling 5 (Rgs5) from Rattus norvegicus (Rat).